Here is a 45-residue protein sequence, read N- to C-terminus: Large ribosomal subunit protein bL34 (45 aa).

Residues 1–45 are disordered; it reads MTKRTFGGTSRKRKRVSGFRVRMRSHTGRRVIKSRRKRGRDRIAV. The span at 10 to 45 shows a compositional bias: basic residues; the sequence is SRKRKRVSGFRVRMRSHTGRRVIKSRRKRGRDRIAV.

It belongs to the bacterial ribosomal protein bL34 family.

The chain is Large ribosomal subunit protein bL34 from Prochlorococcus marinus (strain MIT 9515).